A 114-amino-acid polypeptide reads, in one-letter code: Probable non-functional T cell receptor beta variable 6-7 (114 aa).

An N-terminal signal peptide occupies residues 1–21 (MSLGLLCCVAFSLLWAGPMNA). An Ig-like domain is found at 22–114 (GVTQTPKFHV…TSVYFCASSY (93 aa)). Cys-42 and Cys-110 are oxidised to a cystine. N-linked (GlcNAc...) asparagine glycosylation occurs at Asn-84.

As to quaternary structure, alpha-beta TR is a heterodimer composed of an alpha and beta chain; disulfide-linked. The alpha-beta TR is associated with the transmembrane signaling CD3 coreceptor proteins to form the TR-CD3 (TcR or TCR). The assembly of alpha-beta TR heterodimers with CD3 occurs in the endoplasmic reticulum where a single alpha-beta TR heterodimer associates with one CD3D-CD3E heterodimer, one CD3G-CD3E heterodimer and one CD247 homodimer forming a stable octameric structure. CD3D-CD3E and CD3G-CD3E heterodimers preferentially associate with TR alpha and TR beta chains, respectively. The association of the CD247 homodimer is the last step of TcR assembly in the endoplasmic reticulum and is required for transport to the cell surface.

The protein localises to the cell membrane. Probable non-functional open reading frame (ORF) of V region of the variable domain of T cell receptor (TR) beta chain. Non-functional ORF generally cannot participate in the synthesis of a productive T cell receptor (TR) chain due to altered V-(D)-J or switch recombination and/or splicing site (at mRNA level) and/or conserved amino acid change (protein level). Alpha-beta T cell receptors are antigen specific receptors which are essential to the immune response and are present on the cell surface of T lymphocytes. Recognize peptide-major histocompatibility (MH) (pMH) complexes that are displayed by antigen presenting cells (APC), a prerequisite for efficient T cell adaptive immunity against pathogens. Binding of alpha-beta TR to pMH complex initiates TR-CD3 clustering on the cell surface and intracellular activation of LCK that phosphorylates the ITAM motifs of CD3G, CD3D, CD3E and CD247 enabling the recruitment of ZAP70. In turn ZAP70 phosphorylates LAT, which recruits numerous signaling molecules to form the LAT signalosome. The LAT signalosome propagates signal branching to three major signaling pathways, the calcium, the mitogen-activated protein kinase (MAPK) kinase and the nuclear factor NF-kappa-B (NF-kB) pathways, leading to the mobilization of transcription factors that are critical for gene expression and essential for T cell growth and differentiation. The T cell repertoire is generated in the thymus, by V-(D)-J rearrangement. This repertoire is then shaped by intrathymic selection events to generate a peripheral T cell pool of self-MH restricted, non-autoaggressive T cells. Post-thymic interaction of alpha-beta TR with the pMH complexes shapes TR structural and functional avidity. The chain is Probable non-functional T cell receptor beta variable 6-7 from Homo sapiens (Human).